Consider the following 428-residue polypeptide: tRNA(Ile)-lysidine synthase (428 aa).

Residue 25–30 (SGGIDS) coordinates ATP.

The protein belongs to the tRNA(Ile)-lysidine synthase family.

It is found in the cytoplasm. It carries out the reaction cytidine(34) in tRNA(Ile2) + L-lysine + ATP = lysidine(34) in tRNA(Ile2) + AMP + diphosphate + H(+). Functionally, ligates lysine onto the cytidine present at position 34 of the AUA codon-specific tRNA(Ile) that contains the anticodon CAU, in an ATP-dependent manner. Cytidine is converted to lysidine, thus changing the amino acid specificity of the tRNA from methionine to isoleucine. The chain is tRNA(Ile)-lysidine synthase from Haemophilus ducreyi (strain 35000HP / ATCC 700724).